The sequence spans 348 residues: Histidinol-phosphate aminotransferase (348 aa).

Lys-207 carries the post-translational modification N6-(pyridoxal phosphate)lysine.

It belongs to the class-II pyridoxal-phosphate-dependent aminotransferase family. Histidinol-phosphate aminotransferase subfamily. As to quaternary structure, homodimer. Pyridoxal 5'-phosphate serves as cofactor.

The enzyme catalyses L-histidinol phosphate + 2-oxoglutarate = 3-(imidazol-4-yl)-2-oxopropyl phosphate + L-glutamate. The protein operates within amino-acid biosynthesis; L-histidine biosynthesis; L-histidine from 5-phospho-alpha-D-ribose 1-diphosphate: step 7/9. This Crocosphaera subtropica (strain ATCC 51142 / BH68) (Cyanothece sp. (strain ATCC 51142)) protein is Histidinol-phosphate aminotransferase.